The sequence spans 212 residues: Nitric oxide synthase (212 aa).

Tyr-11 is a binding site for heme b. Positions 30–50 (KKRAIGFKKLAKAVKFSTKLM) are calmodulin-binding. One can recognise a Flavodoxin-like domain in the interval 60–212 (ATILYATETG…AVDTLLEELG (153 aa)). The segment at 155 to 175 (SYSDSRKSSSDEPEHKDNFES) is disordered. The segment covering 158-173 (DSRKSSSDEPEHKDNF) has biased composition (basic and acidic residues). 186 to 212 (AFGLGSRAYPHFCAFARAVDTLLEELG) serves as a coordination point for FMN.

This sequence belongs to the NOS family. It depends on heme b as a cofactor. The cofactor is FAD. FMN serves as cofactor.

The catalysed reaction is 2 L-arginine + 3 NADPH + 4 O2 + H(+) = 2 L-citrulline + 2 nitric oxide + 3 NADP(+) + 4 H2O. Functionally, produces nitric oxide (NO) which is a messenger molecule with diverse functions throughout the body. This is Nitric oxide synthase from Squalus acanthias (Spiny dogfish).